The chain runs to 315 residues: Glutaminase (315 aa).

The substrate site is built by Ser70, Asn120, Glu166, Asn173, Tyr197, Tyr249, and Val267.

The protein belongs to the glutaminase family. Homotetramer.

The catalysed reaction is L-glutamine + H2O = L-glutamate + NH4(+). In Rhizobium meliloti (strain 1021) (Ensifer meliloti), this protein is Glutaminase.